A 337-amino-acid chain; its full sequence is Alcohol dehydrogenase (337 aa).

Residues Cys-38, His-61, Cys-92, Cys-95, Cys-98, Cys-106, and Cys-148 each contribute to the Zn(2+) site. NAD(+) is bound by residues Gly-172–Gly-177, Asp-195, Lys-200, Val-260–Leu-262, and Arg-331.

Belongs to the zinc-containing alcohol dehydrogenase family. Zn(2+) is required as a cofactor.

It carries out the reaction a primary alcohol + NAD(+) = an aldehyde + NADH + H(+). The catalysed reaction is a secondary alcohol + NAD(+) = a ketone + NADH + H(+). Substrate inhibition is not observed with any alcohols, and the enzyme-NADH dissociation is not considered to be a rate-limiting step. Its function is as follows. NAD(+)-dependent alcohol dehydrogenase. In Geobacillus stearothermophilus (Bacillus stearothermophilus), this protein is Alcohol dehydrogenase (adhT).